Reading from the N-terminus, the 234-residue chain is Phosphoribosylaminoimidazole-succinocarboxamide synthase (234 aa).

This sequence belongs to the SAICAR synthetase family.

It carries out the reaction 5-amino-1-(5-phospho-D-ribosyl)imidazole-4-carboxylate + L-aspartate + ATP = (2S)-2-[5-amino-1-(5-phospho-beta-D-ribosyl)imidazole-4-carboxamido]succinate + ADP + phosphate + 2 H(+). Its pathway is purine metabolism; IMP biosynthesis via de novo pathway; 5-amino-1-(5-phospho-D-ribosyl)imidazole-4-carboxamide from 5-amino-1-(5-phospho-D-ribosyl)imidazole-4-carboxylate: step 1/2. This chain is Phosphoribosylaminoimidazole-succinocarboxamide synthase, found in Clostridium botulinum (strain Loch Maree / Type A3).